Consider the following 1368-residue polypeptide: DNA-directed RNA polymerase subunit beta (1368 aa).

This sequence belongs to the RNA polymerase beta chain family. In terms of assembly, the RNAP catalytic core consists of 2 alpha, 1 beta, 1 beta' and 1 omega subunit. When a sigma factor is associated with the core the holoenzyme is formed, which can initiate transcription.

It carries out the reaction RNA(n) + a ribonucleoside 5'-triphosphate = RNA(n+1) + diphosphate. In terms of biological role, DNA-dependent RNA polymerase catalyzes the transcription of DNA into RNA using the four ribonucleoside triphosphates as substrates. The protein is DNA-directed RNA polymerase subunit beta of Paraburkholderia xenovorans (strain LB400).